The sequence spans 98 residues: DNA-binding protein Fis (98 aa).

The segment at residues 74–93 (QTRAALMMGINRGTLRKKLK) is a DNA-binding region (H-T-H motif).

The protein belongs to the transcriptional regulatory Fis family. In terms of assembly, homodimer.

In terms of biological role, activates ribosomal RNA transcription. Plays a direct role in upstream activation of rRNA promoters. In Yersinia enterocolitica serotype O:8 / biotype 1B (strain NCTC 13174 / 8081), this protein is DNA-binding protein Fis.